Consider the following 312-residue polypeptide: Protein-methionine-sulfoxide reductase catalytic subunit MsrP (312 aa).

A signal peptide (tat-type signal) is located at residues 1-42; sequence MALFRYPRPLPSEITPRDMYLSRRSLIGGAAALGAVSATADA. Mo-molybdopterin-binding positions include Asn-68, 71-72, Cys-126, Ser-161, Asn-211, Arg-216, and 227-229; these read YE and GIK.

Belongs to the MsrP family. Heterodimer of a catalytic subunit (MsrP) and a heme-binding subunit (MsrQ). It depends on Mo-molybdopterin as a cofactor. Predicted to be exported by the Tat system. The position of the signal peptide cleavage has not been experimentally proven.

Its subcellular location is the periplasm. The enzyme catalyses L-methionyl-[protein] + a quinone + H2O = L-methionyl-(S)-S-oxide-[protein] + a quinol. It carries out the reaction L-methionyl-[protein] + a quinone + H2O = L-methionyl-(R)-S-oxide-[protein] + a quinol. Functionally, part of the MsrPQ system that repairs oxidized periplasmic proteins containing methionine sulfoxide residues (Met-O), using respiratory chain electrons. Thus protects these proteins from oxidative-stress damage caused by reactive species of oxygen and chlorine generated by the host defense mechanisms. MsrPQ is essential for the maintenance of envelope integrity under bleach stress, rescuing a wide series of structurally unrelated periplasmic proteins from methionine oxidation. The catalytic subunit MsrP is non-stereospecific, being able to reduce both (R-) and (S-) diastereoisomers of methionine sulfoxide. The protein is Protein-methionine-sulfoxide reductase catalytic subunit MsrP of Gluconobacter oxydans (strain 621H) (Gluconobacter suboxydans).